The primary structure comprises 148 residues: Phosphoribosyl-AMP cyclohydrolase (148 aa).

Residue Asp91 participates in Mg(2+) binding. Cys92 provides a ligand contact to Zn(2+). Positions 93 and 95 each coordinate Mg(2+). Zn(2+)-binding residues include Cys109 and Cys116.

This sequence belongs to the PRA-CH family. In terms of assembly, homodimer. It depends on Mg(2+) as a cofactor. Requires Zn(2+) as cofactor.

Its subcellular location is the cytoplasm. It carries out the reaction 1-(5-phospho-beta-D-ribosyl)-5'-AMP + H2O = 1-(5-phospho-beta-D-ribosyl)-5-[(5-phospho-beta-D-ribosylamino)methylideneamino]imidazole-4-carboxamide. It functions in the pathway amino-acid biosynthesis; L-histidine biosynthesis; L-histidine from 5-phospho-alpha-D-ribose 1-diphosphate: step 3/9. Its function is as follows. Catalyzes the hydrolysis of the adenine ring of phosphoribosyl-AMP. This is Phosphoribosyl-AMP cyclohydrolase from Rhodopseudomonas palustris (strain HaA2).